Reading from the N-terminus, the 74-residue chain is MRYSIDDAFNYEEEFETEIQFLMKKHNLKRQDIRILADHPCGEDVLYIKGKFAGYLDEYFYSKDMGIDMHMRVV.

This is an uncharacterized protein from Enterobacteria phage T4 (Bacteriophage T4).